Here is a 210-residue protein sequence, read N- to C-terminus: MARLPKRKNRRNEKKKNANASRVQNVPRTFGLWKSTERIKYTTELKYLNSKCRAIRLHPDLVANNSFPTYCSAWKIDQVEFEFVSYMSPLAGHVGCVFFVVIPAKGLNSRISADEAESLQSAILWDEKGRLKITPISGPISRHPWTNLSQVVTPPQIPKGSTDGERQDLQSGYYLIFDSRKLFGKDLVDKQSVLGELSLTITATYWTSLS.

A compositionally biased stretch (basic residues) spans 1 to 14 (MARLPKRKNRRNEK). The tract at residues 1 to 21 (MARLPKRKNRRNEKKKNANAS) is disordered.

Its subcellular location is the virion. Functionally, capsid protein self-assembles to form a baciliform capsid with a T=1 symmetry, about 18 nm in diameter. The capsid encapsulates three genomic RNAs (Potential). This Cucumis melo (Muskmelon) protein is Capsid protein.